We begin with the raw amino-acid sequence, 85 residues long: Large ribosomal subunit protein bL27 (85 aa).

The protein belongs to the bacterial ribosomal protein bL27 family.

This Pseudomonas aeruginosa (strain LESB58) protein is Large ribosomal subunit protein bL27.